A 228-amino-acid chain; its full sequence is Sec-independent protein translocase protein TatB (228 aa).

The chain crosses the membrane as a helical span at residues 1 to 21 (MFDFGLGELIFVGIIALIVLG). Disordered regions lie at residues 106–164 (TPAD…TDKD) and 196–228 (VPHT…VRKS). The segment covering 135-151 (PSERSDTSAETLGDDRQ) has biased composition (basic and acidic residues). The segment covering 206 to 228 (AINRKRDFRPKHRAKPKLRVRKS) has biased composition (basic residues).

The protein belongs to the TatB family. The Tat system comprises two distinct complexes: a TatABC complex, containing multiple copies of TatA, TatB and TatC subunits, and a separate TatA complex, containing only TatA subunits. Substrates initially bind to the TatABC complex, which probably triggers association of the separate TatA complex to form the active translocon.

It localises to the cell inner membrane. In terms of biological role, part of the twin-arginine translocation (Tat) system that transports large folded proteins containing a characteristic twin-arginine motif in their signal peptide across membranes. Together with TatC, TatB is part of a receptor directly interacting with Tat signal peptides. TatB may form an oligomeric binding site that transiently accommodates folded Tat precursor proteins before their translocation. This chain is Sec-independent protein translocase protein TatB, found in Neisseria gonorrhoeae (strain ATCC 700825 / FA 1090).